The primary structure comprises 472 residues: 3-isopropylmalate dehydratase large subunit (472 aa).

3 residues coordinate [4Fe-4S] cluster: cysteine 349, cysteine 409, and cysteine 412.

This sequence belongs to the aconitase/IPM isomerase family. LeuC type 1 subfamily. As to quaternary structure, heterodimer of LeuC and LeuD. The cofactor is [4Fe-4S] cluster.

The enzyme catalyses (2R,3S)-3-isopropylmalate = (2S)-2-isopropylmalate. It participates in amino-acid biosynthesis; L-leucine biosynthesis; L-leucine from 3-methyl-2-oxobutanoate: step 2/4. Catalyzes the isomerization between 2-isopropylmalate and 3-isopropylmalate, via the formation of 2-isopropylmaleate. In Rhodospirillum rubrum (strain ATCC 11170 / ATH 1.1.1 / DSM 467 / LMG 4362 / NCIMB 8255 / S1), this protein is 3-isopropylmalate dehydratase large subunit.